The sequence spans 65 residues: Large ribosomal subunit protein bL28 (65 aa).

The disordered stretch occupies residues 1–21 (MPGRDQLTGQKALSGNKRSHA).

Belongs to the bacterial ribosomal protein bL28 family.

This Metamycoplasma arthritidis (strain 158L3-1) (Mycoplasma arthritidis) protein is Large ribosomal subunit protein bL28.